Reading from the N-terminus, the 1495-residue chain is Ras GTPase-activating-like protein IQG1 (1495 aa).

A Calponin-homology (CH) domain is found at 108–221 (LCRVSEVKIW…ILISMINKKW (114 aa)). Threonine 264 bears the Phosphothreonine mark. A Phosphoserine modification is found at serine 268. The residue at position 299 (threonine 299) is a Phosphothreonine. 7 consecutive IQ domains span residues 447 to 467 (EQDILRFQACLRGNKFRVLSS), 538 to 567 (SHYPLTKLQSYMRASYVRKKVMSLNTKLND), 568 to 597 (ERESIMKFSAIIRGNVVRCSEDAILSAVHD), 599 to 628 (HKENISKLQSLIRGIFTRSCLASIIYSLGK), 629 to 658 (ENCNIIQLSACIRGNAVRHKVQSLFAPENN), 687 to 716 (EYNNLALFQAFSRGALVRESLDQKSSFYKR), and 717 to 746 (NVRSVIMIQSWIRKSLQRSAYLELLDCPNP). A coiled-coil region spans residues 759–798 (NGTATIEEVQNQLESCQASLDSENMKKERLLKSIRQQLNI). One can recognise a Ras-GAP domain in the interval 876–1100 (SYFTRFVCEM…PHIKDVLYNV (225 aa)).

Interacts with AFR1. Interacts with AKR1. Interacts with activated CDC42. Interacts with calmodulin CMD1. Interacts with myosin MYO1 and its light chain MLC1. Interacts with BUD4. Interacts with INN1. Interacts with SEC3. Interacts with TEM1.

The protein localises to the bud neck. Functionally, required for the assembly and the contraction of the actomyosin ring at the bud neck during cytokinesis. Seems to be involved in additional tasks during cell division like axial bud-site selection and targeted secretion by recruiting the spatial landmark BUD4, the septin CDC12 and the secretion landmark SEC3 to the bud neck. May be regulated by calcium ions. In Saccharomyces cerevisiae (strain ATCC 204508 / S288c) (Baker's yeast), this protein is Ras GTPase-activating-like protein IQG1 (IQG1).